Here is a 388-residue protein sequence, read N- to C-terminus: Probable protein phosphatase 2C 43 (388 aa).

The 300-residue stretch at 53–352 folds into the PPM-type phosphatase domain; the sequence is EFSFAVVQAN…DDITVVVVFI (300 aa). 4 residues coordinate Mn(2+): D84, G85, D284, and D343.

This sequence belongs to the PP2C family. Mg(2+) is required as a cofactor. The cofactor is Mn(2+).

It carries out the reaction O-phospho-L-seryl-[protein] + H2O = L-seryl-[protein] + phosphate. The catalysed reaction is O-phospho-L-threonyl-[protein] + H2O = L-threonyl-[protein] + phosphate. This is Probable protein phosphatase 2C 43 from Oryza sativa subsp. japonica (Rice).